The following is a 340-amino-acid chain: Nuclear hormone receptor family member nhr-268 (340 aa).

The segment at residues 1 to 75 is a DNA-binding region (nuclear receptor); the sequence is MNCLVCSARA…IGMKAASKND (75 aa). 2 consecutive NR C4-type zinc fingers follow at residues 3-23 and 39-58; these read CLVC…CFAC and CKYF…CRAC. Residues 98 to 337 enclose the NR LBD domain; that stretch reads KNDKNYSNFI…KRLMQDIFSH (240 aa).

This sequence belongs to the nuclear hormone receptor family.

Its subcellular location is the nucleus. Its function is as follows. Orphan nuclear receptor. This chain is Nuclear hormone receptor family member nhr-268 (nhr-268), found in Caenorhabditis elegans.